Reading from the N-terminus, the 341-residue chain is Alpha-ketoglutarate-dependent dioxygenase oryG (341 aa).

A substrate-binding site is contributed by H100. Positions 140 and 142 each coordinate Fe cation. T167 contributes to the 2-oxoglutarate binding site. H299 lines the Fe cation pocket. Positions 311 and 315 each coordinate 2-oxoglutarate. Position 315 (R315) interacts with substrate.

Belongs to the TfdA dioxygenase family. Fe(2+) is required as a cofactor.

The protein operates within secondary metabolite biosynthesis. In terms of biological role, alpha-ketoglutarate-dependent dioxygenase; part of the gene cluster that mediates the biosynthesis of oryzines, natural products with an unusual maleidride backbone. The two subunits of the fungal fatty acid synthase oryfasA and oryfasB probably form octenoic acid. This fatty acid is most likely activated by the acyl-CoA ligase oryP to give octenyl-CoA before the citrate synthase-like protein oryE catalyzes condensation with oxaloacetate to form tricarboxylic acid. The next steps of the pathways are conjectural, but a favorite possible route has been proposed, beginning with decarboxylation and concomitant dehydration by the decarboxylase oryM, followed by tautomerization, which may lead to the production of a diene intermediate. Reduction of this diene intermediate could give the known metabolite piliformic acid. On the pathway to oryzine B and oryzine A, however, hydroxylation of the diene by the alpha-ketoglutarate-dependent dioxygenase oryG and lactonisation by the lactonohydrolases oryH or oryL could give oryzine B directly. Finally, enoyl reduction by the dehydrogenase oryD would then convert oryzine B into oryzine A. The sequence is that of Alpha-ketoglutarate-dependent dioxygenase oryG from Aspergillus oryzae (strain ATCC 42149 / RIB 40) (Yellow koji mold).